The following is a 242-amino-acid chain: Cytochrome c oxidase subunit 2 (242 aa).

Topologically, residues Asp-7 to Ile-33 are mitochondrial intermembrane. A helical membrane pass occupies residues Val-34–Asn-55. Topologically, residues Phe-56–Glu-73 are mitochondrial matrix. A helical membrane pass occupies residues Ile-74–Cys-98. The Mitochondrial intermembrane portion of the chain corresponds to Asp-99–Gln-242. Cu cation is bound by residues His-177, Cys-212, Glu-214, Cys-216, His-220, and Met-223. Mg(2+) is bound at residue Glu-214.

It belongs to the cytochrome c oxidase subunit 2 family. In terms of assembly, component of the cytochrome c oxidase (complex IV, CIV), a multisubunit enzyme composed of a catalytic core of 3 subunits and several supernumerary subunits. The complex exists as a monomer or a dimer and forms supercomplexes (SCs) in the inner mitochondrial membrane with ubiquinol-cytochrome c oxidoreductase (cytochrome b-c1 complex, complex III, CIII). It depends on Cu cation as a cofactor. The signal sequence of COX2 is processed by IMP1.

It is found in the mitochondrion inner membrane. The enzyme catalyses 4 Fe(II)-[cytochrome c] + O2 + 8 H(+)(in) = 4 Fe(III)-[cytochrome c] + 2 H2O + 4 H(+)(out). Component of the cytochrome c oxidase, the last enzyme in the mitochondrial electron transport chain which drives oxidative phosphorylation. The respiratory chain contains 3 multisubunit complexes succinate dehydrogenase (complex II, CII), ubiquinol-cytochrome c oxidoreductase (cytochrome b-c1 complex, complex III, CIII) and cytochrome c oxidase (complex IV, CIV), that cooperate to transfer electrons derived from NADH and succinate to molecular oxygen, creating an electrochemical gradient over the inner membrane that drives transmembrane transport and the ATP synthase. Cytochrome c oxidase is the component of the respiratory chain that catalyzes the reduction of oxygen to water. Electrons originating from reduced cytochrome c in the intermembrane space (IMS) are transferred via the dinuclear copper A center (CU(A)) of subunit 2 and heme A of subunit 1 to the active site in subunit 1, a binuclear center (BNC) formed by heme A3 and copper B (CU(B)). The BNC reduces molecular oxygen to 2 water molecules using 4 electrons from cytochrome c in the IMS and 4 protons from the mitochondrial matrix. The sequence is that of Cytochrome c oxidase subunit 2 (COX2) from Yarrowia lipolytica (strain CLIB 122 / E 150) (Yeast).